We begin with the raw amino-acid sequence, 168 residues long: Prespore-specific protein A (168 aa).

The N-terminal stretch at 1 to 19 is a signal peptide; it reads MKFQHTFIALLSLLTYANA. 13 O-linked (GlcNAc) threonine glycosylation sites follow: threonine 110, threonine 114, threonine 116, threonine 118, threonine 120, threonine 122, threonine 124, threonine 126, threonine 128, threonine 130, threonine 132, threonine 134, and threonine 138. 3 consecutive repeat copies span residues 116-119, 120-123, and 124-127. The 3 X 4 AA tandem repeats of T-P-T-V stretch occupies residues 116 to 127; that stretch reads TPTVTPTVTPTV. Residues 116–131 are compositionally biased toward low complexity; sequence TPTVTPTVTPTVTPTP. The disordered stretch occupies residues 116–147; that stretch reads TPTVTPTVTPTVTPTPTNTPNPTPSQTSTTTG. Residue serine 140 is glycosylated (O-linked (GlcNAc) serine). Glycine 147 carries GPI-like-anchor amidated glycine lipidation. Residues 148-168 constitute a propeptide, removed in mature form; sequence SASTVVASLSLIIFSMILSLC.

This sequence belongs to the ponticulin family. Post-translationally, O-glycosylated in the repeat region. The oligosaccharides contain N-acetylglucosamine and fucose as the major constituents. The GPI-like-anchor contains a phosphoceramide group, rather than a phosphatidyl group.

Its subcellular location is the cell membrane. May bind F-actin and nucleates actin assembly. This Dictyostelium discoideum (Social amoeba) protein is Prespore-specific protein A (pspA).